A 331-amino-acid chain; its full sequence is Anthranilate phosphoribosyltransferase (331 aa).

Residues G81, 84-85, S89, 91-94, 109-117, and S121 each bind 5-phospho-alpha-D-ribose 1-diphosphate; these read GD, NCST, and KHGNRAVSS. G81 serves as a coordination point for anthranilate. Residue S93 coordinates Mg(2+). N112 contacts anthranilate. Position 167 (R167) interacts with anthranilate. 2 residues coordinate Mg(2+): D226 and E227.

This sequence belongs to the anthranilate phosphoribosyltransferase family. In terms of assembly, homodimer. Requires Mg(2+) as cofactor.

The enzyme catalyses N-(5-phospho-beta-D-ribosyl)anthranilate + diphosphate = 5-phospho-alpha-D-ribose 1-diphosphate + anthranilate. It participates in amino-acid biosynthesis; L-tryptophan biosynthesis; L-tryptophan from chorismate: step 2/5. Functionally, catalyzes the transfer of the phosphoribosyl group of 5-phosphorylribose-1-pyrophosphate (PRPP) to anthranilate to yield N-(5'-phosphoribosyl)-anthranilate (PRA). The protein is Anthranilate phosphoribosyltransferase of Oleidesulfovibrio alaskensis (strain ATCC BAA-1058 / DSM 17464 / G20) (Desulfovibrio alaskensis).